Consider the following 246-residue polypeptide: MDKNLNQLLKWSIEAQTAANAGQSYHSNGAPTPNNNSGPATGTGAVATSPAPQVTGSGPRPVDPEVLASLFGGPSEAELMKAAMEVITDPSPETTRENKLIAFDNFEQLIENLDNANLLEELSLWSPLISLLDHEDEDMRYHAAWCLGTAVQNNQKTQERLLAMGGVPKLVDLAMKEGESEKVRRKATYALSSAVRNYQPAMDVAADEMHKRGHEVLVNNGTKVDAADMDKVDEVIDVLRNKAKSA.

Residues 23–40 (QSYHSNGAPTPNNNSGPA) show a composition bias toward polar residues. The tract at residues 23 to 63 (QSYHSNGAPTPNNNSGPATGTGAVATSPAPQVTGSGPRPVD) is disordered. ARM repeat units lie at residues 48 to 92 (TSPA…DPSP), 113 to 152 (LDNA…TAVQ), 155 to 196 (QKTQ…SAVR), and 214 to 244 (HEVL…NKAK).

This sequence belongs to the FES1 family.

It is found in the cytoplasm. Its function is as follows. Functions as a nucleotide exchange factor (NEF) for Hsp70 chaperones which accelerates the release of ADP. Required for fully efficient Hsp70-mediated folding of proteins. The sequence is that of Hsp70 nucleotide exchange factor fes-1 (fes-1) from Neurospora crassa (strain ATCC 24698 / 74-OR23-1A / CBS 708.71 / DSM 1257 / FGSC 987).